The sequence spans 282 residues: 3-methyl-2-oxobutanoate hydroxymethyltransferase (282 aa).

Residues Asp44 and Asp83 each contribute to the Mg(2+) site. Residues 44–45 (DS), Asp83, and Lys113 each bind 3-methyl-2-oxobutanoate. Glu115 contacts Mg(2+). Glu182 functions as the Proton acceptor in the catalytic mechanism.

Belongs to the PanB family. Homodecamer; pentamer of dimers. Mg(2+) is required as a cofactor.

It localises to the cytoplasm. It carries out the reaction 3-methyl-2-oxobutanoate + (6R)-5,10-methylene-5,6,7,8-tetrahydrofolate + H2O = 2-dehydropantoate + (6S)-5,6,7,8-tetrahydrofolate. The protein operates within cofactor biosynthesis; (R)-pantothenate biosynthesis; (R)-pantoate from 3-methyl-2-oxobutanoate: step 1/2. Its function is as follows. Catalyzes the reversible reaction in which hydroxymethyl group from 5,10-methylenetetrahydrofolate is transferred onto alpha-ketoisovalerate to form ketopantoate. The protein is 3-methyl-2-oxobutanoate hydroxymethyltransferase of Dehalococcoides mccartyi (strain ATCC BAA-2266 / KCTC 15142 / 195) (Dehalococcoides ethenogenes (strain 195)).